A 149-amino-acid polypeptide reads, in one-letter code: Nucleoside diphosphate kinase (149 aa).

ATP contacts are provided by lysine 9, phenylalanine 57, arginine 85, threonine 91, arginine 102, and asparagine 112. Histidine 115 acts as the Pros-phosphohistidine intermediate in catalysis.

Belongs to the NDK family. As to quaternary structure, homotetramer. It depends on Mg(2+) as a cofactor.

The protein localises to the cytoplasm. The enzyme catalyses a 2'-deoxyribonucleoside 5'-diphosphate + ATP = a 2'-deoxyribonucleoside 5'-triphosphate + ADP. It catalyses the reaction a ribonucleoside 5'-diphosphate + ATP = a ribonucleoside 5'-triphosphate + ADP. Its function is as follows. Major role in the synthesis of nucleoside triphosphates other than ATP. The ATP gamma phosphate is transferred to the NDP beta phosphate via a ping-pong mechanism, using a phosphorylated active-site intermediate. This Nostoc punctiforme (strain ATCC 29133 / PCC 73102) protein is Nucleoside diphosphate kinase.